Reading from the N-terminus, the 37-residue chain is Cellular retinoic acid-binding protein 2 (37 aa).

Residues 21-31 carry the Nuclear localization signal motif; that stretch reads KALGVNMMLRK.

This sequence belongs to the calycin superfamily. Fatty-acid binding protein (FABP) family. Embryo.

It is found in the cytoplasm. The protein localises to the endoplasmic reticulum. The protein resides in the nucleus. Functionally, transports retinoic acid to the nucleus. Regulates the access of retinoic acid to the nuclear retinoic acid receptors. This chain is Cellular retinoic acid-binding protein 2 (CRABP2), found in Gallus gallus (Chicken).